Here is a 229-residue protein sequence, read N- to C-terminus: Peptidase E (229 aa).

Catalysis depends on charge relay system residues Ser-120, Asp-135, and His-157.

This sequence belongs to the peptidase S51 family.

The protein resides in the cytoplasm. It catalyses the reaction Dipeptidase E catalyzes the hydrolysis of dipeptides Asp-|-Xaa. It does not act on peptides with N-terminal Glu, Asn or Gln, nor does it cleave isoaspartyl peptides.. Hydrolyzes dipeptides containing N-terminal aspartate residues. May play a role in allowing the cell to use peptide aspartate to spare carbon otherwise required for the synthesis of the aspartate family of amino acids. The polypeptide is Peptidase E (Salmonella arizonae (strain ATCC BAA-731 / CDC346-86 / RSK2980)).